A 186-amino-acid chain; its full sequence is Threonylcarbamoyl-AMP synthase (186 aa).

The YrdC-like domain occupies 6-186; it reads GFRLRLAANA…FDAMSGRRIR (181 aa).

This sequence belongs to the SUA5 family. TsaC subfamily.

The protein localises to the cytoplasm. The catalysed reaction is L-threonine + hydrogencarbonate + ATP = L-threonylcarbamoyladenylate + diphosphate + H2O. Functionally, required for the formation of a threonylcarbamoyl group on adenosine at position 37 (t(6)A37) in tRNAs that read codons beginning with adenine. Catalyzes the conversion of L-threonine, HCO(3)(-)/CO(2) and ATP to give threonylcarbamoyl-AMP (TC-AMP) as the acyladenylate intermediate, with the release of diphosphate. This chain is Threonylcarbamoyl-AMP synthase, found in Methylococcus capsulatus (strain ATCC 33009 / NCIMB 11132 / Bath).